The following is a 317-amino-acid chain: L-lactate dehydrogenase 1 (317 aa).

Residues Val17, Asp38, Lys43, Tyr69, and 83-84 (GA) contribute to the NAD(+) site. 2 residues coordinate substrate: Gln86 and Arg92. NAD(+)-binding positions include Ser105, 122-124 (ATN), and Ser147. 124 to 127 (NPVD) contacts substrate. 152–155 (DSAR) provides a ligand contact to substrate. The active-site Proton acceptor is the His179. At Tyr223 the chain carries Phosphotyrosine. Position 232 (Thr232) interacts with substrate.

Belongs to the LDH/MDH superfamily. LDH family. Homotetramer.

It is found in the cytoplasm. The enzyme catalyses (S)-lactate + NAD(+) = pyruvate + NADH + H(+). It participates in fermentation; pyruvate fermentation to lactate; (S)-lactate from pyruvate: step 1/1. In terms of biological role, catalyzes the conversion of lactate to pyruvate (Potential). Appears to be the primary factor that allows S.aureus growth during nitrosative stress in both aerobically and anaerobically cultured cells. In Staphylococcus aureus (strain bovine RF122 / ET3-1), this protein is L-lactate dehydrogenase 1.